A 351-amino-acid polypeptide reads, in one-letter code: Cyanuric acid amidohydrolase (351 aa).

The RU A stretch occupies residues 1-96; that stretch reads MPSLRAHVFR…HWTVFARETV (96 aa). Substrate-binding positions include Arg-53 and 77-78; that span reads SG. An RU B region spans residues 103–240; it reads ALAIGVSRTP…HEIIVLGMSA (138 aa). Residue Lys-153 is part of the active site. Residues Arg-185 and 223–224 contribute to the substrate site; that span reads SS. The active-site Nucleophile is the Ser-223. The interval 246–351 is RU C; it reads LSIDHAVMRD…PVAIIVEKEQ (106 aa). Mg(2+) is bound at residue Glu-283. Substrate is bound by residues Arg-310 and 329–330; that span reads SG. Mg(2+)-binding residues include Ala-332, Gln-335, Gly-336, Pro-337, and Gly-340.

The protein belongs to the cyclic amide hydrolase (CyAH) family. Homotetramer.

The enzyme catalyses cyanurate + H2O = 1-carboxybiuret + H(+). It participates in xenobiotic degradation; atrazine degradation; biuret from cyanurate: step 1/1. Its activity is regulated as follows. Inhibited by barbituric acid. Responsible for the hydrolysis of cyanuric acid, an intermediate formed during catabolism of s-triazine based compounds in herbicides such as atrazine and polymers such as melamine. Catalyzes the hydrolytic opening of the s-triazine ring of cyanuric acid (2,4,6-trihydroxy-s-triazine) to yield carbon dioxide and carboxybiuret, which spontaneously decarboxylates to biuret. The sequence is that of Cyanuric acid amidohydrolase from Rhizobium johnstonii (strain DSM 114642 / LMG 32736 / 3841) (Rhizobium leguminosarum bv. viciae).